A 160-amino-acid chain; its full sequence is Transcription elongation factor GreA (160 aa).

Residues 49-75 adopt a coiled-coil conformation; the sequence is SEYDEAKNDQAFTEGKILQLENKLKNA.

This sequence belongs to the GreA/GreB family.

In terms of biological role, necessary for efficient RNA polymerase transcription elongation past template-encoded arresting sites. The arresting sites in DNA have the property of trapping a certain fraction of elongating RNA polymerases that pass through, resulting in locked ternary complexes. Cleavage of the nascent transcript by cleavage factors such as GreA or GreB allows the resumption of elongation from the new 3'terminus. GreA releases sequences of 2 to 3 nucleotides. The chain is Transcription elongation factor GreA from Clostridium botulinum (strain Alaska E43 / Type E3).